A 346-amino-acid polypeptide reads, in one-letter code: Uroporphyrinogen decarboxylase (346 aa).

Residues 26–30, phenylalanine 45, aspartate 76, tyrosine 153, serine 208, and histidine 323 each bind substrate; that span reads RQAGR.

This sequence belongs to the uroporphyrinogen decarboxylase family. In terms of assembly, homodimer.

It is found in the cytoplasm. The enzyme catalyses uroporphyrinogen III + 4 H(+) = coproporphyrinogen III + 4 CO2. It functions in the pathway porphyrin-containing compound metabolism; protoporphyrin-IX biosynthesis; coproporphyrinogen-III from 5-aminolevulinate: step 4/4. Functionally, catalyzes the decarboxylation of four acetate groups of uroporphyrinogen-III to yield coproporphyrinogen-III. This is Uroporphyrinogen decarboxylase from Prochlorococcus marinus subsp. pastoris (strain CCMP1986 / NIES-2087 / MED4).